Reading from the N-terminus, the 332-residue chain is 4-hydroxyproline 2-epimerase 2 (332 aa).

Cysteine 89 functions as the Proton acceptor in the catalytic mechanism. Substrate contacts are provided by residues histidine 222, aspartate 248, and 253-254 (GT).

Belongs to the proline racemase family.

The enzyme catalyses trans-4-hydroxy-L-proline = cis-4-hydroxy-D-proline. Catalyzes the epimerization of trans-4-hydroxy-L-proline (t4LHyp) to cis-4-hydroxy-D-proline (c4DHyp). Is likely involved in a degradation pathway that converts t4LHyp to alpha-ketoglutarate. Displays no proline racemase activity. The protein is 4-hydroxyproline 2-epimerase 2 of Rhizobium rhizogenes (strain K84 / ATCC BAA-868) (Agrobacterium radiobacter).